Here is a 366-residue protein sequence, read N- to C-terminus: MATEKTPDWKIVDLQWAPDLGPVPVQDAMRPTRESQGEQEMIARMWVMCAIQMQDKLCAAKCTKQHFERYRSWLTAEYERFKQPGYPQVPDSRELVDMSNDARLAAMNKLREGVKNTYMWPVIEGPWRVYDNVVDIVEGRVKLVKVLLQDGLLEKFYDWANGLSEVRPLFNRMGRSNSSLRILEIGAGTGGTTARALEGLKSDDGELLYSSYEFTDISPLFFDAARRRFEGYSNIEYRALDISRNAVEQGFEAGAYDLVIASNVLHATPCLVDTLKNVRLLLKPNGFLFNQELSPPGKYVDFMVGLLPGWWLGDADGRAEGPCIPPEEWHRRLEQAGFEGLHAVGFDSDPPYYYNANMIARPAVNA.

S-adenosyl-L-methionine is bound by residues threonine 189, aspartate 216, and 245 to 246 (NA).

It belongs to the class I-like SAM-binding methyltransferase superfamily.

It functions in the pathway secondary metabolite biosynthesis. Methyltransferase; part of the gene cluster that mediates the biosynthesis of calbistrin A and related compounds. Calbistrin A is a secondary metabolite with an interesting structure that was recently found to have bioactivity against leukemia cells. It consists of two polyketides linked by an ester bond: a bicyclic decalin containing polyketide and a linear 12 carbon dioic acid structure. The polyketide synthase calA is probably responsible for forming the decalin moiety. Because calA lacks a designated enoylreductase (ER) domain, the required activity is provided by the trans-enoyl reductase calK. Following release from the PKS, calF then probably catalyzes the oxidation and the subsequent Diels Alder cycloisomerization that lead to the formation of the decalin moiety. The decalin polyketide backbone includes two C-methyl groups, at C7 and C11 in backbone, of which the C7 position is probably methylated by the methyltransferase domain of calA. A candidate for adding the methyl group at C11, if not done by CalA, is the cluster methyltransferase calH. Several additional tailoring enzymes within the cluster could be involved in the modification of the decalin polyketide product. Those include the 3 cytochrome P450 monooxygenases CalE, CalG and CalL, of which one might be responsible for the introduction of the extra hydroxyl group attached to the backbone of the decalin moiety, at position C9 in the backbone, that allows for attachment of the linear moiety. One tailoring enzyme activity that is expected to be involved in biosynthesis of calbistrin is an acyltransferase for connecting the two polyketide synthase products, and which could be performed by the cluster acyltransferase calJ. The enzyme responsible for the biosynthesis of the linear moiety, probably a second PKS, has not been identified yet. The sequence is that of Methyltransferase calH from Penicillium decumbens.